The sequence spans 317 residues: Methionyl-tRNA formyltransferase (317 aa).

(6S)-5,6,7,8-tetrahydrofolate is bound at residue 111 to 114 (SLLP).

This sequence belongs to the Fmt family.

It carries out the reaction L-methionyl-tRNA(fMet) + (6R)-10-formyltetrahydrofolate = N-formyl-L-methionyl-tRNA(fMet) + (6S)-5,6,7,8-tetrahydrofolate + H(+). Attaches a formyl group to the free amino group of methionyl-tRNA(fMet). The formyl group appears to play a dual role in the initiator identity of N-formylmethionyl-tRNA by promoting its recognition by IF2 and preventing the misappropriation of this tRNA by the elongation apparatus. In Chlorobium phaeobacteroides (strain BS1), this protein is Methionyl-tRNA formyltransferase.